The chain runs to 585 residues: Arginine--tRNA ligase (585 aa).

The 'HIGH' region motif lies at 131 to 141 (ANPTGPMHVGH).

It belongs to the class-I aminoacyl-tRNA synthetase family. In terms of assembly, monomer.

The protein resides in the cytoplasm. The enzyme catalyses tRNA(Arg) + L-arginine + ATP = L-arginyl-tRNA(Arg) + AMP + diphosphate. The sequence is that of Arginine--tRNA ligase from Rhizobium meliloti (strain 1021) (Ensifer meliloti).